A 218-amino-acid chain; its full sequence is Serine/threonine-protein phosphatase 2 (218 aa).

The Mn(2+) site is built by aspartate 22, histidine 24, aspartate 51, and asparagine 77. The active-site Proton donor is histidine 78. Mn(2+) is bound at residue histidine 187.

This sequence belongs to the PPP phosphatase family. Mn(2+) serves as cofactor.

The catalysed reaction is O-phospho-L-seryl-[protein] + H2O = L-seryl-[protein] + phosphate. The enzyme catalyses O-phospho-L-threonyl-[protein] + H2O = L-threonyl-[protein] + phosphate. Functionally, has been shown, in vitro, to act on Ser, Thr and Tyr-phosphorylated substrates. The chain is Serine/threonine-protein phosphatase 2 (pphB) from Escherichia coli (strain K12).